The primary structure comprises 583 residues: Phosphoglucomutase, cytoplasmic 2 (583 aa).

The alpha-D-glucose 1,6-bisphosphate site is built by Arg25 and Ser124. Ser124 serves as the catalytic Phosphoserine intermediate. Mg(2+) is bound by residues Ser124, Asp300, Asp302, and Asp304. Residue Ser124 is modified to Phosphoserine. Alpha-D-glucose 1,6-bisphosphate is bound by residues Asp304, Arg305, Thr368, Glu387, Ser389, and Lys400.

This sequence belongs to the phosphohexose mutase family. As to quaternary structure, monomer. Mg(2+) is required as a cofactor.

The protein resides in the cytoplasm. It carries out the reaction alpha-D-glucose 1-phosphate = alpha-D-glucose 6-phosphate. It catalyses the reaction O-phospho-L-seryl-[protein] + alpha-D-glucose 1-phosphate = alpha-D-glucose 1,6-bisphosphate + L-seryl-[protein]. The enzyme catalyses alpha-D-glucose 1,6-bisphosphate + L-seryl-[protein] = O-phospho-L-seryl-[protein] + alpha-D-glucose 6-phosphate. Catalyzes the reversible isomerization of alpha-D-glucose 1-phosphate to alpha-D-glucose 6-phosphate. The mechanism proceeds via the intermediate compound alpha-D-glucose 1,6-bisphosphate. This enzyme participates in both the breakdown and synthesis of glucose. The polypeptide is Phosphoglucomutase, cytoplasmic 2 (Zea mays (Maize)).